The following is a 333-amino-acid chain: Adenosine deaminase (333 aa).

Residues His-12 and His-14 each contribute to the Zn(2+) site. The substrate site is built by His-14 and Asp-16. Residues 14-16 (HLD), Ser-141, and Gly-170 each bind pentostatin. Position 170 (Gly-170) interacts with substrate. His-197 contributes to the Zn(2+) binding site. Residues Glu-200, His-221, and Asp-278 each contribute to the pentostatin site. Glu-200 functions as the Proton donor in the catalytic mechanism. Residue Asp-278 participates in Zn(2+) binding. Substrate is bound at residue Asp-279.

It belongs to the metallo-dependent hydrolases superfamily. Adenosine and AMP deaminases family. Adenosine deaminase subfamily. The cofactor is Zn(2+).

The enzyme catalyses adenosine + H2O + H(+) = inosine + NH4(+). It carries out the reaction 2'-deoxyadenosine + H2O + H(+) = 2'-deoxyinosine + NH4(+). Its function is as follows. Catalyzes the hydrolytic deamination of adenosine and 2-deoxyadenosine. This Salmonella typhimurium (strain LT2 / SGSC1412 / ATCC 700720) protein is Adenosine deaminase.